Here is a 193-residue protein sequence, read N- to C-terminus: V-type ATP synthase subunit E (193 aa).

This sequence belongs to the V-ATPase E subunit family.

In terms of biological role, produces ATP from ADP in the presence of a proton gradient across the membrane. The polypeptide is V-type ATP synthase subunit E (Anaeromyxobacter sp. (strain Fw109-5)).